Consider the following 152-residue polypeptide: Ribosomal RNA large subunit methyltransferase H (152 aa).

Residues Leu-71, Gly-101, and 120–125 (LSKLTF) each bind S-adenosyl-L-methionine.

Belongs to the RNA methyltransferase RlmH family. Homodimer.

The protein resides in the cytoplasm. It carries out the reaction pseudouridine(1915) in 23S rRNA + S-adenosyl-L-methionine = N(3)-methylpseudouridine(1915) in 23S rRNA + S-adenosyl-L-homocysteine + H(+). Functionally, specifically methylates the pseudouridine at position 1915 (m3Psi1915) in 23S rRNA. The chain is Ribosomal RNA large subunit methyltransferase H from Thermosipho melanesiensis (strain DSM 12029 / CIP 104789 / BI429).